We begin with the raw amino-acid sequence, 1300 residues long: ATP-dependent RNA helicase HrpA (1300 aa).

The Helicase ATP-binding domain occupies 87-250 (LEAIRDHQVV…FNNAPIIEVS (164 aa)). Residue 100–107 (GETGSGKT) coordinates ATP. Positions 197–200 (DEAH) match the DEAH box motif. Residues 274-444 (QLQAIFDAVD…SVILQMTALG (171 aa)) enclose the Helicase C-terminal domain.

Belongs to the DEAD box helicase family. DEAH subfamily.

The catalysed reaction is ATP + H2O = ADP + phosphate + H(+). Not yet known. The chain is ATP-dependent RNA helicase HrpA (hrpA) from Escherichia coli (strain K12).